The following is a 122-amino-acid chain: UPF0102 protein RHECIAT_CH0000358 (122 aa).

Belongs to the UPF0102 family.

This is UPF0102 protein RHECIAT_CH0000358 from Rhizobium etli (strain CIAT 652).